Here is a 90-residue protein sequence, read N- to C-terminus: Succinate dehydrogenase subunit 7, mitochondrial (90 aa).

The N-terminal 41 residues, 1-41 (MAQPAFLSALRSRLRSPQPQAPALPHLQPPRRGFHVELGAR), are a transit peptide targeting the mitochondrion.

Component of complex II composed of eight subunits in plants: four classical SDH subunits SDH1, SDH2, SDH3 and SDH4 (a flavoprotein (FP), an iron-sulfur protein (IP), and a cytochrome b composed of a large and a small subunit.), as well as four subunits unknown in mitochondria from bacteria and heterotrophic eukaryotes.

Its subcellular location is the mitochondrion inner membrane. It functions in the pathway carbohydrate metabolism; tricarboxylic acid cycle. This is Succinate dehydrogenase subunit 7, mitochondrial from Oryza sativa subsp. japonica (Rice).